Reading from the N-terminus, the 62-residue chain is Large ribosomal subunit protein uL30 (62 aa).

It belongs to the universal ribosomal protein uL30 family. In terms of assembly, part of the 50S ribosomal subunit.

The sequence is that of Large ribosomal subunit protein uL30 from Marinobacter nauticus (strain ATCC 700491 / DSM 11845 / VT8) (Marinobacter aquaeolei).